We begin with the raw amino-acid sequence, 643 residues long: Carboxy-terminal kinesin 2 (643 aa).

2 disordered regions span residues 1–42 and 81–101; these read MDST…SSLE and MRPK…KTKV. Residues 1–116 form a globular region; the sequence is MDSTDKKVQV…QPAAIGAEKK (116 aa). Residues 88–101 show a composition bias toward polar residues; sequence PGITSTSFSGKTKV. Residues 117-296 are a coiled coil; it reads KRAAWDLKGQ…LVQELKGNIR (180 aa). The 340-residue stretch at 294–633 folds into the Kinesin motor domain; it reads NIRVFCRVRP…LRFASKVNEC (340 aa). 386 to 393 serves as a coordination point for ATP; it reads GQTGSGKT.

This sequence belongs to the TRAFAC class myosin-kinesin ATPase superfamily. Kinesin family. NCD subfamily.

It localises to the cytoplasm. The protein localises to the cytoskeleton. In terms of biological role, promotes mitotic spindle assembly. The protein is Carboxy-terminal kinesin 2 of Xenopus laevis (African clawed frog).